A 362-amino-acid chain; its full sequence is MSSNRKDDHVRHAVDQHRDRTPVNDFDAIGFQHHALAGIDAADVDLGVDIAGKRWHTPLFINAMTGGSAAATDINRGLAIAARETGLPVASGSLSAYFRDPGLAGSFRVLREENPHGVVIANVNATATLDQARRAVDLLAADALQIHLNAVQEIVMPEGDRSFRSWPRRIEHLAAGVPVPVIVKEVGFGLSRPTVAWLRDAGVAVADVGGRGGTNFARIENDRRPAADFSFLDTWGQSTPACLLDSAEVTGIALVASGGIRSPLDVAKALALGADATGVAGRFLATLLDRGAEGLIETIRAWLDQLRSIATVLGAATPADLRRCDLLITGEVAAFCRLRGIDAAAYAHRSHWWHPSERRSLL.

5–6 provides a ligand contact to substrate; sequence RK. FMN is bound by residues 63-65, Ser93, and Asn122; that span reads AMT. Substrate is bound at residue Gln152. Glu153 contacts Mg(2+). FMN-binding positions include Lys184, Thr214, 259–261, and 280–281; these read GIR and AG.

Belongs to the IPP isomerase type 2 family. As to quaternary structure, homooctamer. Dimer of tetramers. It depends on FMN as a cofactor. NADPH is required as a cofactor. The cofactor is Mg(2+).

The protein localises to the cytoplasm. The enzyme catalyses isopentenyl diphosphate = dimethylallyl diphosphate. Its function is as follows. Involved in the biosynthesis of isoprenoids. Catalyzes the 1,3-allylic rearrangement of the homoallylic substrate isopentenyl (IPP) to its allylic isomer, dimethylallyl diphosphate (DMAPP). The polypeptide is Isopentenyl-diphosphate delta-isomerase (Nocardia farcinica (strain IFM 10152)).